The chain runs to 170 residues: Ribosome maturation factor RimM (170 aa).

The region spanning lysine 97 to tryptophan 170 is the PRC barrel domain.

This sequence belongs to the RimM family. Binds ribosomal protein uS19.

The protein resides in the cytoplasm. In terms of biological role, an accessory protein needed during the final step in the assembly of 30S ribosomal subunit, possibly for assembly of the head region. Essential for efficient processing of 16S rRNA. May be needed both before and after RbfA during the maturation of 16S rRNA. It has affinity for free ribosomal 30S subunits but not for 70S ribosomes. In Dechloromonas aromatica (strain RCB), this protein is Ribosome maturation factor RimM.